The primary structure comprises 228 residues: Phosphatidate cytidylyltransferase (228 aa).

6 helical membrane passes run 31-51 (FVVA…LVGL), 65-85 (IHYL…LIFL), 93-113 (LVIM…MIGG), 131-151 (WTGL…VSLI), 165-185 (IYLF…DLFI), and 206-226 (GVLD…GINI).

The protein belongs to the CDS family.

Its subcellular location is the cell membrane. It catalyses the reaction a 1,2-diacyl-sn-glycero-3-phosphate + CTP + H(+) = a CDP-1,2-diacyl-sn-glycerol + diphosphate. The protein operates within phospholipid metabolism; CDP-diacylglycerol biosynthesis; CDP-diacylglycerol from sn-glycerol 3-phosphate: step 3/3. The sequence is that of Phosphatidate cytidylyltransferase (cdsA) from Rickettsia typhi (strain ATCC VR-144 / Wilmington).